Reading from the N-terminus, the 110-residue chain is Phosphoribosyl-ATP pyrophosphatase (110 aa).

The protein belongs to the PRA-PH family.

It is found in the cytoplasm. The enzyme catalyses 1-(5-phospho-beta-D-ribosyl)-ATP + H2O = 1-(5-phospho-beta-D-ribosyl)-5'-AMP + diphosphate + H(+). It functions in the pathway amino-acid biosynthesis; L-histidine biosynthesis; L-histidine from 5-phospho-alpha-D-ribose 1-diphosphate: step 2/9. This is Phosphoribosyl-ATP pyrophosphatase from Pseudomonas fluorescens (strain ATCC BAA-477 / NRRL B-23932 / Pf-5).